A 328-amino-acid chain; its full sequence is Phosphatidylglycerol--prolipoprotein diacylglyceryl transferase (328 aa).

Transmembrane regions (helical) follow at residues 15–35, 58–78, and 106–126; these read VIQGIPITWYSLSYIFIILIS, FMFSLVLGAILGGRLASTLVY, and GMAIHGGFLGAIIAPLIIINT. Position 156 (Arg156) interacts with a 1,2-diacyl-sn-glycero-3-phospho-(1'-sn-glycerol). Helical transmembrane passes span 242–262 and 289–309; these read GFIFGIYVMLYAFFRFFIEYL and ISMGQILSLVLMFSGLIWVVV.

It belongs to the Lgt family.

The protein resides in the cell inner membrane. It carries out the reaction L-cysteinyl-[prolipoprotein] + a 1,2-diacyl-sn-glycero-3-phospho-(1'-sn-glycerol) = an S-1,2-diacyl-sn-glyceryl-L-cysteinyl-[prolipoprotein] + sn-glycerol 1-phosphate + H(+). Its pathway is protein modification; lipoprotein biosynthesis (diacylglyceryl transfer). Its function is as follows. Catalyzes the transfer of the diacylglyceryl group from phosphatidylglycerol to the sulfhydryl group of the N-terminal cysteine of a prolipoprotein, the first step in the formation of mature lipoproteins. This is Phosphatidylglycerol--prolipoprotein diacylglyceryl transferase from Borrelia garinii subsp. bavariensis (strain ATCC BAA-2496 / DSM 23469 / PBi) (Borreliella bavariensis).